Here is a 330-residue protein sequence, read N- to C-terminus: Ketol-acid reductoisomerase (NADP(+)) (330 aa).

A KARI N-terminal Rossmann domain is found at Met1–Thr181. NADP(+) contacts are provided by residues Tyr24–Gln27, Arg47, Ser50, Ser52, and Asp82–Gln85. The active site involves His107. An NADP(+)-binding site is contributed by Gly133. One can recognise a KARI C-terminal knotted domain in the interval Thr182–Leu327. Mg(2+) contacts are provided by Asp190, Glu194, Glu226, and Glu230. Ser251 serves as a coordination point for substrate.

Belongs to the ketol-acid reductoisomerase family. Mg(2+) is required as a cofactor.

It catalyses the reaction (2R)-2,3-dihydroxy-3-methylbutanoate + NADP(+) = (2S)-2-acetolactate + NADPH + H(+). The enzyme catalyses (2R,3R)-2,3-dihydroxy-3-methylpentanoate + NADP(+) = (S)-2-ethyl-2-hydroxy-3-oxobutanoate + NADPH + H(+). It participates in amino-acid biosynthesis; L-isoleucine biosynthesis; L-isoleucine from 2-oxobutanoate: step 2/4. Its pathway is amino-acid biosynthesis; L-valine biosynthesis; L-valine from pyruvate: step 2/4. Its function is as follows. Involved in the biosynthesis of branched-chain amino acids (BCAA). Catalyzes an alkyl-migration followed by a ketol-acid reduction of (S)-2-acetolactate (S2AL) to yield (R)-2,3-dihydroxy-isovalerate. In the isomerase reaction, S2AL is rearranged via a Mg-dependent methyl migration to produce 3-hydroxy-3-methyl-2-ketobutyrate (HMKB). In the reductase reaction, this 2-ketoacid undergoes a metal-dependent reduction by NADPH to yield (R)-2,3-dihydroxy-isovalerate. This is Ketol-acid reductoisomerase (NADP(+)) from Chlorobium phaeovibrioides (strain DSM 265 / 1930) (Prosthecochloris vibrioformis (strain DSM 265)).